We begin with the raw amino-acid sequence, 150 residues long: Large ribosomal subunit protein eL19 (150 aa).

The tract at residues 56-90 is disordered; the sequence is RGISSGRLKERKHKRRSKGEGRKHGSRKGKSGART.

This sequence belongs to the eukaryotic ribosomal protein eL19 family. As to quaternary structure, part of the 50S ribosomal subunit.

Its function is as follows. Binds to the 23S rRNA. This chain is Large ribosomal subunit protein eL19, found in Sulfolobus acidocaldarius (strain ATCC 33909 / DSM 639 / JCM 8929 / NBRC 15157 / NCIMB 11770).